We begin with the raw amino-acid sequence, 201 residues long: Small ribosomal subunit protein uS4c (201 aa).

Positions 89-152 constitute an S4 RNA-binding domain; the sequence is MRLDNILFRL…NSRTLVQNLL (64 aa).

It belongs to the universal ribosomal protein uS4 family. In terms of assembly, part of the 30S ribosomal subunit. Contacts protein S5. The interaction surface between S4 and S5 is involved in control of translational fidelity.

It is found in the plastid. It localises to the chloroplast. One of the primary rRNA binding proteins, it binds directly to 16S rRNA where it nucleates assembly of the body of the 30S subunit. In terms of biological role, with S5 and S12 plays an important role in translational accuracy. The polypeptide is Small ribosomal subunit protein uS4c (rps4) (Arabidopsis thaliana (Mouse-ear cress)).